We begin with the raw amino-acid sequence, 786 residues long: Endonuclease MutS2 (786 aa).

332 to 339 contributes to the ATP binding site; that stretch reads GPNTGGKT. Residues 711-786 form the Smr domain; the sequence is IDLRGMDSME…GTGVTVVELK (76 aa).

Belongs to the DNA mismatch repair MutS family. MutS2 subfamily. In terms of assembly, homodimer. Binds to stalled ribosomes, contacting rRNA.

Its function is as follows. Endonuclease that is involved in the suppression of homologous recombination and thus may have a key role in the control of bacterial genetic diversity. Acts as a ribosome collision sensor, splitting the ribosome into its 2 subunits. Detects stalled/collided 70S ribosomes which it binds and splits by an ATP-hydrolysis driven conformational change. Acts upstream of the ribosome quality control system (RQC), a ribosome-associated complex that mediates the extraction of incompletely synthesized nascent chains from stalled ribosomes and their subsequent degradation. Probably generates substrates for RQC. In Clostridium tetani (strain Massachusetts / E88), this protein is Endonuclease MutS2.